The following is a 233-amino-acid chain: Uracil-DNA glycosylase (233 aa).

Aspartate 70 serves as the catalytic Proton acceptor.

Belongs to the uracil-DNA glycosylase (UDG) superfamily. UNG family.

The protein resides in the cytoplasm. It carries out the reaction Hydrolyzes single-stranded DNA or mismatched double-stranded DNA and polynucleotides, releasing free uracil.. Its function is as follows. Excises uracil residues from the DNA which can arise as a result of misincorporation of dUMP residues by DNA polymerase or due to deamination of cytosine. In Helicobacter pylori (strain P12), this protein is Uracil-DNA glycosylase.